A 96-amino-acid chain; its full sequence is UPF0235 protein PC1_3453 (96 aa).

The protein belongs to the UPF0235 family.

In Pectobacterium carotovorum subsp. carotovorum (strain PC1), this protein is UPF0235 protein PC1_3453.